The chain runs to 458 residues: GTPase Obg (458 aa).

Positions 1–157 (MSFLDRVKIY…ITLYLELKVL (157 aa)) constitute an Obg domain. An OBG-type G domain is found at 158-326 (ADLGLVGFPN…VLNEIVKVIS (169 aa)). GTP is bound by residues 164-171 (GFPNAGKS), 189-193 (FTTLN), 210-213 (DIPG), 280-283 (NKAD), and 307-309 (SAA). Residues serine 171 and threonine 191 each contribute to the Mg(2+) site. Positions 341–419 (AVHGVEPLFK…VGQKEFEWSG (79 aa)) constitute an OCT domain. The interval 420–458 (TELDSERAEQPDFEGYKRRTTQAERLEKRRQRRLKKEEK) is disordered. Positions 423–446 (DSERAEQPDFEGYKRRTTQAERLE) are enriched in basic and acidic residues. Residues 447–458 (KRRQRRLKKEEK) show a composition bias toward basic residues.

It belongs to the TRAFAC class OBG-HflX-like GTPase superfamily. OBG GTPase family. Monomer. Requires Mg(2+) as cofactor.

It is found in the cytoplasm. Its function is as follows. An essential GTPase which binds GTP, GDP and possibly (p)ppGpp with moderate affinity, with high nucleotide exchange rates and a fairly low GTP hydrolysis rate. Plays a role in control of the cell cycle, stress response, ribosome biogenesis and in those bacteria that undergo differentiation, in morphogenesis control. The sequence is that of GTPase Obg from Elusimicrobium minutum (strain Pei191).